Here is a 732-residue protein sequence, read N- to C-terminus: Zinc/cadmium/lead-transporting P-type ATPase (732 aa).

At 1–124 (MSTPDNHGKK…QAADEPQASR (124 aa)) the chain is on the cytoplasmic side. In terms of domain architecture, HMA spans 48 to 112 (TRYSWKVSGM…AVQKAGYSLR (65 aa)). The Zn(2+) site is built by aspartate 58, cysteine 59, and cysteine 62. A helical membrane pass occupies residues 125 to 145 (LKENLPLITLIVMMAISWGLE). Residue glutamine 146 is a topological domain, periplasmic. The chain crosses the membrane as a helical span at residues 147-167 (FNHPFGQLAFIATTLVGLYPI). Residues 168–179 (ARQALRLIKSGS) lie on the Cytoplasmic side of the membrane. A helical transmembrane segment spans residues 180–197 (YFAIETLMSVAAIGALFI). At 198–202 (GATAE) the chain is on the periplasmic side. Residues 203 to 222 (AAMVLLLFLIGERLEGWAAS) traverse the membrane as a helical segment. Residues 223–356 (RARQGVSALM…IDRFSRIYTP (134 aa)) are Cytoplasmic-facing. Residues 357–377 (AIMAVALLVTLVPPLLFAASW) traverse the membrane as a helical segment. The Periplasmic portion of the chain corresponds to 378 to 383 (QEWIYK). Residues 384–404 (GLTLLLIGCPCALVISTPAAI) traverse the membrane as a helical segment. 2 residues coordinate Zn(2+): cysteine 392 and cysteine 394. Over 405–685 (TSGLAAAARR…RATHANIRQN (281 aa)) the chain is Cytoplasmic. The active-site 4-aspartylphosphate intermediate is aspartate 436. 3 residues coordinate Mg(2+): aspartate 436, threonine 438, and aspartate 628. The helical transmembrane segment at 686–702 (ITIALGLKGIFLVTTLL) threads the bilayer. Residues 703–707 (GMTGL) are Periplasmic-facing. Residues 708–729 (WLAVLADTGATVLVTANALRLL) form a helical membrane-spanning segment. Zn(2+) is bound at residue aspartate 714. The Cytoplasmic segment spans residues 730–732 (RRR).

This sequence belongs to the cation transport ATPase (P-type) (TC 3.A.3) family. Type IB subfamily.

The protein localises to the cell inner membrane. It catalyses the reaction Pb(2+)(in) + ATP + H2O = Pb(2+)(out) + ADP + phosphate + H(+). The enzyme catalyses Zn(2+)(in) + ATP + H2O = Zn(2+)(out) + ADP + phosphate + H(+). The catalysed reaction is Cd(2+)(in) + ATP + H2O = Cd(2+)(out) + ADP + phosphate + H(+). Functionally, confers resistance to zinc, cadmium and lead. Couples the hydrolysis of ATP with the export of zinc, cadmium or lead. In Shigella sonnei (strain Ss046), this protein is Zinc/cadmium/lead-transporting P-type ATPase.